The primary structure comprises 341 residues: Glycerol-3-phosphate dehydrogenase [NAD(P)+] (341 aa).

NADPH is bound by residues Ser14, Phe15, Arg35, and Lys108. The sn-glycerol 3-phosphate site is built by Lys108 and Gly136. Ala140 provides a ligand contact to NADPH. Lys191, Asp244, Ser254, Arg255, and Asn256 together coordinate sn-glycerol 3-phosphate. Lys191 serves as the catalytic Proton acceptor. Residue Arg255 participates in NADPH binding. Positions 279 and 281 each coordinate NADPH.

Belongs to the NAD-dependent glycerol-3-phosphate dehydrogenase family.

The protein resides in the cytoplasm. The catalysed reaction is sn-glycerol 3-phosphate + NAD(+) = dihydroxyacetone phosphate + NADH + H(+). It carries out the reaction sn-glycerol 3-phosphate + NADP(+) = dihydroxyacetone phosphate + NADPH + H(+). It functions in the pathway membrane lipid metabolism; glycerophospholipid metabolism. Functionally, catalyzes the reduction of the glycolytic intermediate dihydroxyacetone phosphate (DHAP) to sn-glycerol 3-phosphate (G3P), the key precursor for phospholipid synthesis. This Pseudomonas syringae pv. tomato (strain ATCC BAA-871 / DC3000) protein is Glycerol-3-phosphate dehydrogenase [NAD(P)+].